The sequence spans 218 residues: GEM-like protein 6 (218 aa).

One can recognise a GRAM domain in the interval 96–174 (KIYKRLFKVC…CKINGVNQSQ (79 aa)).

This sequence belongs to the GEM family.

This chain is GEM-like protein 6, found in Arabidopsis thaliana (Mouse-ear cress).